The chain runs to 365 residues: tRNA/tmRNA (uracil-C(5))-methyltransferase (365 aa).

S-adenosyl-L-methionine-binding residues include glutamine 196, tyrosine 224, asparagine 229, glutamate 245, and aspartate 298. Cysteine 323 acts as the Nucleophile in catalysis. Glutamate 357 serves as the catalytic Proton acceptor.

The protein belongs to the class I-like SAM-binding methyltransferase superfamily. RNA M5U methyltransferase family. TrmA subfamily.

It carries out the reaction uridine(54) in tRNA + S-adenosyl-L-methionine = 5-methyluridine(54) in tRNA + S-adenosyl-L-homocysteine + H(+). The catalysed reaction is uridine(341) in tmRNA + S-adenosyl-L-methionine = 5-methyluridine(341) in tmRNA + S-adenosyl-L-homocysteine + H(+). Dual-specificity methyltransferase that catalyzes the formation of 5-methyluridine at position 54 (m5U54) in all tRNAs, and that of position 341 (m5U341) in tmRNA (transfer-mRNA). The polypeptide is tRNA/tmRNA (uracil-C(5))-methyltransferase (Nautilia profundicola (strain ATCC BAA-1463 / DSM 18972 / AmH)).